The primary structure comprises 178 residues: MNKQVVAKRYASALFEIAKEQQLLDQLEQELRVVKQVFAQNETLLSVLNHPKIALAKKKALVQEAFANISTVLQHTLMLLLDRHRIDIVNDLADAFIALANEARGVAEAIVYSARPLTEDETNALADVFAKKVGVDTLRITNIIDKDVIGGVKVRIGNRIFDGSVSGKLARLQRQLTR.

The protein belongs to the ATPase delta chain family. F-type ATPases have 2 components, F(1) - the catalytic core - and F(0) - the membrane proton channel. F(1) has five subunits: alpha(3), beta(3), gamma(1), delta(1), epsilon(1). F(0) has three main subunits: a(1), b(2) and c(10-14). The alpha and beta chains form an alternating ring which encloses part of the gamma chain. F(1) is attached to F(0) by a central stalk formed by the gamma and epsilon chains, while a peripheral stalk is formed by the delta and b chains.

Its subcellular location is the cell membrane. Its function is as follows. F(1)F(0) ATP synthase produces ATP from ADP in the presence of a proton or sodium gradient. F-type ATPases consist of two structural domains, F(1) containing the extramembraneous catalytic core and F(0) containing the membrane proton channel, linked together by a central stalk and a peripheral stalk. During catalysis, ATP synthesis in the catalytic domain of F(1) is coupled via a rotary mechanism of the central stalk subunits to proton translocation. This protein is part of the stalk that links CF(0) to CF(1). It either transmits conformational changes from CF(0) to CF(1) or is implicated in proton conduction. The chain is ATP synthase subunit delta from Anoxybacillus flavithermus (strain DSM 21510 / WK1).